The primary structure comprises 504 residues: Maturase K (504 aa).

Belongs to the intron maturase 2 family. MatK subfamily.

The protein resides in the plastid. It localises to the chloroplast. Functionally, usually encoded in the trnK tRNA gene intron. Probably assists in splicing its own and other chloroplast group II introns. This chain is Maturase K, found in Betula papyrifera (Paper birch).